The sequence spans 494 residues: Aspartyl/glutamyl-tRNA(Asn/Gln) amidotransferase subunit B (494 aa).

Belongs to the GatB/GatE family. GatB subfamily. In terms of assembly, heterotrimer of A, B and C subunits.

The enzyme catalyses L-glutamyl-tRNA(Gln) + L-glutamine + ATP + H2O = L-glutaminyl-tRNA(Gln) + L-glutamate + ADP + phosphate + H(+). The catalysed reaction is L-aspartyl-tRNA(Asn) + L-glutamine + ATP + H2O = L-asparaginyl-tRNA(Asn) + L-glutamate + ADP + phosphate + 2 H(+). Functionally, allows the formation of correctly charged Asn-tRNA(Asn) or Gln-tRNA(Gln) through the transamidation of misacylated Asp-tRNA(Asn) or Glu-tRNA(Gln) in organisms which lack either or both of asparaginyl-tRNA or glutaminyl-tRNA synthetases. The reaction takes place in the presence of glutamine and ATP through an activated phospho-Asp-tRNA(Asn) or phospho-Glu-tRNA(Gln). This chain is Aspartyl/glutamyl-tRNA(Asn/Gln) amidotransferase subunit B, found in Rhodopseudomonas palustris (strain BisB5).